The sequence spans 148 residues: Leghemoglobin 3 (148 aa).

The Globin domain occupies 2 to 148; that stretch reads GFTEKQEALV…LSAAIKKAMS (147 aa). At tyrosine 30 the chain carries Nitrated tyrosine. Residue serine 45 participates in heme b binding. Serine 45 bears the Phosphoserine mark. Histidine 63 lines the O2 pocket. Residues lysine 66, histidine 95, and lysine 98 each contribute to the heme b site. Tyrosine 136 carries the nitrated tyrosine modification.

This sequence belongs to the plant globin family. As to quaternary structure, monomer. Post-translationally, nitrated in effective nodules and particularly in hypoxic conditions; this mechanism may play a protective role in the symbiosis by buffering toxic peroxynitrite NO(2)(-). Nitration level decrease during nodule senescence. In terms of processing, phosphorylation at Ser-45 disrupts the molecular environment of its porphyrin ring oxygen binding pocket, thus leading to a reduced oxygen consumption and to the delivery of oxygen O(2) to symbiosomes. Stem nodules.

It localises to the cytoplasm. It is found in the cytosol. The protein resides in the nucleus. Functionally, leghemoglobin that reversibly binds oxygen O(2) through a pentacoordinated heme iron. In stem nodules, facilitates the diffusion of oxygen to the bacteroids while preventing the bacterial nitrogenase from being inactivated by buffering dioxygen, nitric oxide and carbon monoxide, and promoting the formation of reactive oxygen species (ROS, e.g. H(2)O(2)). This role is essential for symbiotic nitrogen fixation (SNF). The protein is Leghemoglobin 3 of Sesbania rostrata.